The primary structure comprises 152 residues: Superoxide dismutase [Cu-Zn] (152 aa).

Cu cation-binding residues include His45, His47, and His62. An intrachain disulfide couples Cys56 to Cys145. Zn(2+) is bound by residues His62, His70, His79, and Asp82. His119 is a Cu cation binding site.

Belongs to the Cu-Zn superoxide dismutase family. In terms of assembly, homodimer. It depends on Cu cation as a cofactor. Zn(2+) is required as a cofactor.

It is found in the cytoplasm. The enzyme catalyses 2 superoxide + 2 H(+) = H2O2 + O2. Destroys radicals which are normally produced within the cells and which are toxic to biological systems. This chain is Superoxide dismutase [Cu-Zn] (SODCC), found in Brassica oleracea var. capitata (Cabbage).